The chain runs to 131 residues: MSMSDPIADLLTRIRNAQMVSKATVSVPSSKVKIAIAQVLKDEGYIDGFEVKSEGNKSELEISLKYYAGRPVIERIERVSRPGLRVYKGRDSIPQVMNGLGVAIVTTPKGVMTDRKARATGVGGEVLCYVA.

It belongs to the universal ribosomal protein uS8 family. Part of the 30S ribosomal subunit. Contacts proteins S5 and S12.

In terms of biological role, one of the primary rRNA binding proteins, it binds directly to 16S rRNA central domain where it helps coordinate assembly of the platform of the 30S subunit. This is Small ribosomal subunit protein uS8 from Paracidovorax citrulli (strain AAC00-1) (Acidovorax citrulli).